The primary structure comprises 240 residues: Putative N-acetylmannosamine-6-phosphate 2-epimerase (240 aa).

It belongs to the NanE family.

The catalysed reaction is an N-acyl-D-glucosamine 6-phosphate = an N-acyl-D-mannosamine 6-phosphate. Its pathway is amino-sugar metabolism; N-acetylneuraminate degradation; D-fructose 6-phosphate from N-acetylneuraminate: step 3/5. Its function is as follows. Converts N-acetylmannosamine-6-phosphate (ManNAc-6-P) to N-acetylglucosamine-6-phosphate (GlcNAc-6-P). The protein is Putative N-acetylmannosamine-6-phosphate 2-epimerase of Vibrio cholerae serotype O1 (strain ATCC 39315 / El Tor Inaba N16961).